The chain runs to 83 residues: Arminin 4364 (83 aa).

An N-terminal signal peptide occupies residues 1-18 (MKTVFAILFLAFIALTYA). A propeptide spanning residues 19 to 55 (RSYEDVKEEIKNEVEKEILEDLEKETDELNERKINDA) is cleaved from the precursor. At V80 the chain carries Valine amide.

This sequence belongs to the arminin family. In terms of tissue distribution, expressed in entodermal epithelium along the body column.

It is found in the secreted. Its subcellular location is the target cell membrane. Its function is as follows. Antimicrobial peptide with a broad-spectrum antimicrobial activity. Keeps its antibacterial activity under a wide range of salt concentrations that mimic physiological conditions of human blood, which is surprising, since Hydra is an obligate freshwater animal with nearly no salt tolerance. Does not affect red blood cells. This is Arminin 4364 from Hydra vulgaris (Hydra).